The primary structure comprises 664 residues: Metal-nicotianamine transporter YSL2 (664 aa).

Helical transmembrane passes span 31–51 (ITVR…VICL), 55–75 (LTTG…FVFL), 103–123 (CAVA…LLGL), 147–167 (GVGW…VVLV), 209–229 (GFIK…FYSG), 268–288 (LVNL…WPLI), 314–334 (FICI…ILFF), 378–398 (IPLW…IIAI), 409–429 (FVLV…YGAG), 457–477 (VVAG…SADL), 496–516 (VAQA…FFLF), 549–569 (SALP…AVAA), 594–614 (FLVG…VYVW), and 629–649 (VASG…LLAL).

The protein belongs to the YSL (TC 2.A.67.2) family. Expressed in roots, leaves and weakly in shoots. Restricted to the veins, to the central cylinder of the young roots and to the pericycle and the endodermis cells facing the meta-xylem tubes in older roots. Expressed in the vasculature of sepals, petals, anthers, stigma and siliques, but not in developing seeds or in meristematic zones.

Its subcellular location is the cell membrane. Its function is as follows. May be involved in the lateral transport of nicotianamine-chelated metals in the vasculature. The chain is Metal-nicotianamine transporter YSL2 (YSL2) from Arabidopsis thaliana (Mouse-ear cress).